A 262-amino-acid chain; its full sequence is MIHETAKIHPAAVVEEGAKIGANVTVGPFTYITSTVEIGEGTEVMSHVVIKGHTKIGKDNRIFPHAVIGEENQDKKYGGEDTTVVIGDRNVIREAVQVHRGTVQDKATTVIGDDNLLCVNAHIAHDVVVGNHTHIGNNAILGGHVTVDDHAGVMALSAIHPFCTVGAYAYVGGCSAVVQDVPAYVLAQGNHATPFGLNLVGLKRNGFEKPEIRALQKAYKEIYRSGKTLEEVKPILAEMAQEWPAVKRFSDILETTERGIIR.

Belongs to the transferase hexapeptide repeat family. LpxA subfamily. Homotrimer.

Its subcellular location is the cytoplasm. It carries out the reaction a (3R)-hydroxyacyl-[ACP] + UDP-N-acetyl-alpha-D-glucosamine = a UDP-3-O-[(3R)-3-hydroxyacyl]-N-acetyl-alpha-D-glucosamine + holo-[ACP]. Its pathway is glycolipid biosynthesis; lipid IV(A) biosynthesis; lipid IV(A) from (3R)-3-hydroxytetradecanoyl-[acyl-carrier-protein] and UDP-N-acetyl-alpha-D-glucosamine: step 1/6. Its function is as follows. Involved in the biosynthesis of lipid A, a phosphorylated glycolipid that anchors the lipopolysaccharide to the outer membrane of the cell. The sequence is that of Acyl-[acyl-carrier-protein]--UDP-N-acetylglucosamine O-acyltransferase from Vibrio campbellii (strain ATCC BAA-1116).